We begin with the raw amino-acid sequence, 284 residues long: 2-dehydro-3-deoxyphosphooctonate aldolase (284 aa).

It belongs to the KdsA family.

Its subcellular location is the cytoplasm. It carries out the reaction D-arabinose 5-phosphate + phosphoenolpyruvate + H2O = 3-deoxy-alpha-D-manno-2-octulosonate-8-phosphate + phosphate. The protein operates within carbohydrate biosynthesis; 3-deoxy-D-manno-octulosonate biosynthesis; 3-deoxy-D-manno-octulosonate from D-ribulose 5-phosphate: step 2/3. It functions in the pathway bacterial outer membrane biogenesis; lipopolysaccharide biosynthesis. This chain is 2-dehydro-3-deoxyphosphooctonate aldolase, found in Burkholderia orbicola (strain MC0-3).